A 246-amino-acid chain; its full sequence is MHSWPYTSPMDALIRYFPQVDYSSCWHAMRDLTDHRDAQQSDEFWVLEHPPIFTLGQAGKPEHVLNAGEIPVVNSDRGGQVTYHGPGQTVVYLMLDIKRLGLGSRGLVSAIEQGIIDFLASLGITAVNRDDAPGVYVQGAKIASLGLRIRRGATYHGLAINRDMDLSPWHRINPCGHVDQPMTTLKAQGVDLDRHSMEQQLVSFLAKRLGLTPRTAALPDWYNTRQENVTTGGDPGSALTQQPERL.

The 176-residue stretch at 38–213 (AQQSDEFWVL…FLAKRLGLTP (176 aa)) folds into the BPL/LPL catalytic domain. Substrate contacts are provided by residues 77–84 (RGGQVTYH), 144–146 (SLG), and 157–159 (GLA). Residue Cys-175 is the Acyl-thioester intermediate of the active site. Residues 225–246 (RQENVTTGGDPGSALTQQPERL) are disordered.

It belongs to the LipB family.

It localises to the cytoplasm. The catalysed reaction is octanoyl-[ACP] + L-lysyl-[protein] = N(6)-octanoyl-L-lysyl-[protein] + holo-[ACP] + H(+). It functions in the pathway protein modification; protein lipoylation via endogenous pathway; protein N(6)-(lipoyl)lysine from octanoyl-[acyl-carrier-protein]: step 1/2. Functionally, catalyzes the transfer of endogenously produced octanoic acid from octanoyl-acyl-carrier-protein onto the lipoyl domains of lipoate-dependent enzymes. Lipoyl-ACP can also act as a substrate although octanoyl-ACP is likely to be the physiological substrate. This chain is Octanoyltransferase, found in Alcanivorax borkumensis (strain ATCC 700651 / DSM 11573 / NCIMB 13689 / SK2).